The chain runs to 309 residues: Putative pyridoxal kinase C6F6.11c (309 aa).

Residues Ser-12 and Tyr-123 each coordinate substrate. ATP is bound by residues 182-183 (SS) and 209-221 (LIPV…RGTG). Asp-222 provides a ligand contact to substrate.

Belongs to the pyridoxine kinase family. A divalent metal cation is required as a cofactor.

The protein resides in the cytoplasm. Its subcellular location is the nucleus. It carries out the reaction pyridoxal + ATP = pyridoxal 5'-phosphate + ADP + H(+). In terms of biological role, required for synthesis of pyridoxal-5-phosphate from vitamin B6. The sequence is that of Putative pyridoxal kinase C6F6.11c from Schizosaccharomyces pombe (strain 972 / ATCC 24843) (Fission yeast).